The following is a 111-amino-acid chain: Irditoxin subunit B (111 aa).

A signal peptide spans 1–19 (MKTLLLAVAVVAFVCLGSA). Positions 20 to 34 (DQLGLGRQQIDWGKG) are excised as a propeptide. Gln35 carries the pyrrolidone carboxylic acid modification. Intrachain disulfides connect Cys44-Cys68, Cys47-Cys55, Cys61-Cys87, Cys91-Cys102, and Cys103-Cys108.

Belongs to the three-finger toxin family. Ancestral subfamily. Boigatoxin sub-subfamily. As to quaternary structure, heterodimer of A and B chains; disulfide-linked. As to expression, expressed by the venom gland.

Its subcellular location is the secreted. Functionally, this bird and reptile-specific postsynaptic neurotoxin inhibits the chick muscle alpha-1-beta-1-gamma-delta (CHRNA1-CHRNB1-CHRNG-CHRND) nicotinic acetylcholine receptor (nAChR) 100-fold more compared with the mouse receptor. In vivo, produces rapid flaccid paralysis, dyspnea and increased respiratory rate in geckos. At sublethal doses geckos were immobilized for up to three days and then recovered. Chicks injected with lethal doses showed rapid onset of inactivity, dyspnea and neck droop, and no extended paralysis with survival was seen. This is Irditoxin subunit B from Boiga irregularis (Brown tree snake).